Reading from the N-terminus, the 188-residue chain is Ribosome-recycling factor (188 aa).

The protein belongs to the RRF family.

The protein localises to the cytoplasm. Functionally, responsible for the release of ribosomes from messenger RNA at the termination of protein biosynthesis. May increase the efficiency of translation by recycling ribosomes from one round of translation to another. This is Ribosome-recycling factor from Caulobacter sp. (strain K31).